Reading from the N-terminus, the 165-residue chain is Thiol peroxidase (165 aa).

In terms of domain architecture, Thioredoxin spans 18-164 (RKVGDKAPNF…YEAAIEAAKK (147 aa)). Catalysis depends on Cys-60, which acts as the Cysteine sulfenic acid (-SOH) intermediate. A disulfide bond links Cys-60 and Cys-94.

The protein belongs to the peroxiredoxin family. Tpx subfamily. In terms of assembly, homodimer.

It carries out the reaction a hydroperoxide + [thioredoxin]-dithiol = an alcohol + [thioredoxin]-disulfide + H2O. Its function is as follows. Thiol-specific peroxidase that catalyzes the reduction of hydrogen peroxide and organic hydroperoxides to water and alcohols, respectively. Plays a role in cell protection against oxidative stress by detoxifying peroxides. In Listeria monocytogenes serovar 1/2a (strain ATCC BAA-679 / EGD-e), this protein is Thiol peroxidase.